An 892-amino-acid polypeptide reads, in one-letter code: von Willebrand factor A domain-containing protein 7 (892 aa).

The signal sequence occupies residues 1-27; sequence MLPVEVPLSQLGPPVLLLQLLLPPTSA. Asparagine 54 is a glycosylation site (N-linked (GlcNAc...) asparagine). The segment at 231 to 272 is disordered; it reads YFGTNPPKPPGKCSHGGRFDQSSSQPPRGGINKDSTSPSFSP. One can recognise a VWFA domain in the interval 313–495; the sequence is ASSLSFVLDT…HIRDVAAVVG (183 aa).

The protein localises to the secreted. The protein is von Willebrand factor A domain-containing protein 7 (Vwa7) of Rattus norvegicus (Rat).